A 1311-amino-acid polypeptide reads, in one-letter code: Suppressor of presenilin protein 4 (1311 aa).

Residues methionine 1–serine 11 are compositionally biased toward polar residues. Disordered regions lie at residues methionine 1–asparagine 58 and methionine 75–histidine 95. 2 C2H2-type zinc fingers span residues histidine 112–histidine 134 and phenylalanine 141–histidine 163. Positions glutamate 226–lysine 304 are disordered. Residues serine 280 to valine 293 are compositionally biased toward low complexity. C2H2-type zinc fingers lie at residues glutamine 327–histidine 349, tyrosine 355–histidine 379, lysine 451–histidine 476, and phenylalanine 487–histidine 510. The interval valine 544–serine 563 is disordered. The span at aspartate 552–phenylalanine 561 shows a compositional bias: acidic residues. 6 C2H2-type zinc fingers span residues phenylalanine 585–histidine 607, phenylalanine 613–histidine 635, phenylalanine 709–histidine 731, tyrosine 737–histidine 759, tyrosine 794–histidine 816, and asparagine 823–histidine 845. Residues arginine 865–glutamate 1002 are disordered. Over residues asparagine 874–valine 897 the composition is skewed to basic and acidic residues. Residues glycine 898 to serine 907 are compositionally biased toward acidic residues. Over residues valine 908–arginine 920 the composition is skewed to basic and acidic residues. The span at asparagine 956–asparagine 979 shows a compositional bias: polar residues. C2H2-type zinc fingers lie at residues leucine 1022 to histidine 1044, tyrosine 1053 to histidine 1075, tyrosine 1104 to histidine 1126, lysine 1162 to histidine 1184, tyrosine 1190 to histidine 1212, and leucine 1261 to histidine 1284.

Expressed in neurons.

Its subcellular location is the nucleus. In terms of biological role, probable transcriptional regulator, which participates in the transcriptional repression of the presenilin protein hop-1. Might play a role in the oxidative stress response. In Caenorhabditis elegans, this protein is Suppressor of presenilin protein 4 (spr-4).